The chain runs to 161 residues: 2-C-methyl-D-erythritol 2,4-cyclodiphosphate synthase (161 aa).

A divalent metal cation is bound by residues D9 and H11. 4-CDP-2-C-methyl-D-erythritol 2-phosphate contacts are provided by residues 9–11 and 37–38; these read DFH and HS. H45 contacts a divalent metal cation. Residues 59–61, 64–68, 135–138, and R145 contribute to the 4-CDP-2-C-methyl-D-erythritol 2-phosphate site; these read DIG, FPDTD, and TTTE.

The protein belongs to the IspF family. Homotrimer. The cofactor is a divalent metal cation.

The catalysed reaction is 4-CDP-2-C-methyl-D-erythritol 2-phosphate = 2-C-methyl-D-erythritol 2,4-cyclic diphosphate + CMP. The protein operates within isoprenoid biosynthesis; isopentenyl diphosphate biosynthesis via DXP pathway; isopentenyl diphosphate from 1-deoxy-D-xylulose 5-phosphate: step 4/6. In terms of biological role, involved in the biosynthesis of isopentenyl diphosphate (IPP) and dimethylallyl diphosphate (DMAPP), two major building blocks of isoprenoid compounds. Catalyzes the conversion of 4-diphosphocytidyl-2-C-methyl-D-erythritol 2-phosphate (CDP-ME2P) to 2-C-methyl-D-erythritol 2,4-cyclodiphosphate (ME-CPP) with a corresponding release of cytidine 5-monophosphate (CMP). The polypeptide is 2-C-methyl-D-erythritol 2,4-cyclodiphosphate synthase (Leptospira interrogans serogroup Icterohaemorrhagiae serovar copenhageni (strain Fiocruz L1-130)).